The chain runs to 149 residues: Ribonuclease pancreatic (149 aa).

The first 25 residues, 1 to 25 (MGLEKSFILFSLLVLVLGWVQPSLS), serve as a signal peptide directing secretion. Residues 30 to 40 (ADKFKRQHMDT) show a composition bias toward basic and acidic residues. Residues 30-49 (ADKFKRQHMDTEGSSNSSPT) are disordered. Substrate contacts are provided by Lys32 and Arg35. The active-site Proton acceptor is His37. 4 disulfides stabilise this stretch: Cys51/Cys109, Cys65/Cys120, Cys83/Cys135, and Cys90/Cys97. An N-linked (GlcNAc...) asparagine glycan is attached at Asn62. 66-70 (KPVNT) contributes to the substrate binding site. Asn87 carries N-linked (GlcNAc...) asparagine glycosylation. Substrate contacts are provided by Lys91 and Arg110. Residue His144 is the Proton donor of the active site.

This sequence belongs to the pancreatic ribonuclease family. In terms of assembly, monomer. Interacts with and forms tight 1:1 complexes with RNH1. Dimerization of two such complexes may occur. Interaction with RNH1 inhibits this protein. As to expression, pancreas.

The protein localises to the secreted. The catalysed reaction is an [RNA] containing cytidine + H2O = an [RNA]-3'-cytidine-3'-phosphate + a 5'-hydroxy-ribonucleotide-3'-[RNA].. It carries out the reaction an [RNA] containing uridine + H2O = an [RNA]-3'-uridine-3'-phosphate + a 5'-hydroxy-ribonucleotide-3'-[RNA].. In terms of biological role, endonuclease that catalyzes the cleavage of RNA on the 3' side of pyrimidine nucleotides. Acts on single-stranded and double-stranded RNA. The sequence is that of Ribonuclease pancreatic (RNASE1) from Niviventer cremoriventer (Dark-tailed tree rat).